Reading from the N-terminus, the 254-residue chain is Sugar fermentation stimulation protein homolog (254 aa).

The protein belongs to the SfsA family.

This is Sugar fermentation stimulation protein homolog from Synechococcus sp. (strain CC9605).